Reading from the N-terminus, the 37-residue chain is Cytochrome b6-f complex subunit 5 (37 aa).

Residues 5-25 (LLFGIVLGLIPITLAGLFVTA) traverse the membrane as a helical segment.

It belongs to the PetG family. In terms of assembly, the 4 large subunits of the cytochrome b6-f complex are cytochrome b6, subunit IV (17 kDa polypeptide, PetD), cytochrome f and the Rieske protein, while the 4 small subunits are PetG, PetL, PetM and PetN. The complex functions as a dimer.

The protein localises to the plastid. The protein resides in the chloroplast thylakoid membrane. Component of the cytochrome b6-f complex, which mediates electron transfer between photosystem II (PSII) and photosystem I (PSI), cyclic electron flow around PSI, and state transitions. PetG is required for either the stability or assembly of the cytochrome b6-f complex. This chain is Cytochrome b6-f complex subunit 5, found in Lemna minor (Common duckweed).